The primary structure comprises 316 residues: NAD kinase 1 (316 aa).

Catalysis depends on Asp67, which acts as the Proton acceptor. 67–68 (DG) is a binding site for NAD(+). The tract at residues 132–151 (RSAEERADAPTPLQQPDVED) is disordered. NAD(+)-binding positions include 160 to 161 (ND), Arg190, and Asp192.

This sequence belongs to the NAD kinase family. A divalent metal cation serves as cofactor.

The protein localises to the cytoplasm. The enzyme catalyses NAD(+) + ATP = ADP + NADP(+) + H(+). In terms of biological role, involved in the regulation of the intracellular balance of NAD and NADP, and is a key enzyme in the biosynthesis of NADP. Catalyzes specifically the phosphorylation on 2'-hydroxyl of the adenosine moiety of NAD to yield NADP. This Parasynechococcus marenigrum (strain WH8102) protein is NAD kinase 1.